Here is a 365-residue protein sequence, read N- to C-terminus: Chaperone protein DnaJ (365 aa).

Residues 5 to 71 enclose the J domain; that stretch reads DFYEILGIAK…QKRQAYDQFG (67 aa). The CR-type zinc finger occupies 128 to 206; the sequence is GTTVKIRIPK…CHGKGVVHKQ (79 aa). Zn(2+) is bound by residues C141, C144, C158, C161, C180, C183, C194, and C197. 4 CXXCXGXG motif repeats span residues 141 to 148, 158 to 165, 180 to 187, and 194 to 201; these read CDTCSGTG, CLTCGGAG, CNACSGTG, and CNNCHGKG.

The protein belongs to the DnaJ family. In terms of assembly, homodimer. Zn(2+) is required as a cofactor.

It is found in the cytoplasm. Its function is as follows. Participates actively in the response to hyperosmotic and heat shock by preventing the aggregation of stress-denatured proteins and by disaggregating proteins, also in an autonomous, DnaK-independent fashion. Unfolded proteins bind initially to DnaJ; upon interaction with the DnaJ-bound protein, DnaK hydrolyzes its bound ATP, resulting in the formation of a stable complex. GrpE releases ADP from DnaK; ATP binding to DnaK triggers the release of the substrate protein, thus completing the reaction cycle. Several rounds of ATP-dependent interactions between DnaJ, DnaK and GrpE are required for fully efficient folding. Also involved, together with DnaK and GrpE, in the DNA replication of plasmids through activation of initiation proteins. The protein is Chaperone protein DnaJ of Vesicomyosocius okutanii subsp. Calyptogena okutanii (strain HA).